A 567-amino-acid polypeptide reads, in one-letter code: Glutamine--tRNA ligase (567 aa).

Residues Pro47–His57 carry the 'HIGH' region motif. Residues Glu48–Asn50 and His54–Ser60 contribute to the ATP site. L-glutamine-binding residues include Asp80 and Tyr225. Residues Thr244 and Arg274 to Leu275 each bind ATP. The short motif at Ile281 to Arg285 is the 'KMSKS' region element.

The protein belongs to the class-I aminoacyl-tRNA synthetase family. Monomer.

The protein resides in the cytoplasm. The enzyme catalyses tRNA(Gln) + L-glutamine + ATP = L-glutaminyl-tRNA(Gln) + AMP + diphosphate. The polypeptide is Glutamine--tRNA ligase (Pseudomonas putida (strain ATCC 47054 / DSM 6125 / CFBP 8728 / NCIMB 11950 / KT2440)).